Reading from the N-terminus, the 431-residue chain is Histidinol dehydrogenase (431 aa).

Tyr-127, Gln-185, and Asn-208 together coordinate NAD(+). 3 residues coordinate substrate: Ser-234, Gln-256, and His-259. Zn(2+) is bound by residues Gln-256 and His-259. Catalysis depends on proton acceptor residues Glu-323 and His-324. Substrate-binding residues include His-324, Asp-357, Glu-411, and His-416. Asp-357 provides a ligand contact to Zn(2+). His-416 serves as a coordination point for Zn(2+).

It belongs to the histidinol dehydrogenase family. Requires Zn(2+) as cofactor.

It catalyses the reaction L-histidinol + 2 NAD(+) + H2O = L-histidine + 2 NADH + 3 H(+). The protein operates within amino-acid biosynthesis; L-histidine biosynthesis; L-histidine from 5-phospho-alpha-D-ribose 1-diphosphate: step 9/9. Its function is as follows. Catalyzes the sequential NAD-dependent oxidations of L-histidinol to L-histidinaldehyde and then to L-histidine. The protein is Histidinol dehydrogenase of Vibrio parahaemolyticus serotype O3:K6 (strain RIMD 2210633).